The primary structure comprises 260 residues: Ribosomal RNA small subunit methyltransferase G (260 aa).

Residues Gly-111, Phe-116, and Arg-181 each coordinate S-adenosyl-L-methionine.

It belongs to the methyltransferase superfamily. RNA methyltransferase RsmG family.

The protein localises to the cytoplasm. The catalysed reaction is guanosine(527) in 16S rRNA + S-adenosyl-L-methionine = N(7)-methylguanosine(527) in 16S rRNA + S-adenosyl-L-homocysteine. Specifically methylates the N7 position of guanine in position 527 of 16S rRNA. This is Ribosomal RNA small subunit methyltransferase G from Nitrobacter hamburgensis (strain DSM 10229 / NCIMB 13809 / X14).